The chain runs to 675 residues: MASGSALIFDEEMSRYKLLWTDPACEIEVPERLTVSYEALRTHGLAQRCKAVPVRQATEQEILLAHSEEYLEAVKQTPGMNVEELMAFSKKYNDVYFHQNIYHCAKLAAGATLQLVDSVMKREVRNGMALVRPPGHHSQRSAANGFCVFNNVAIAALYAKKNYNLNRILIVDWDVHHGQGIQYCFEEDPSVLYFSWHRYEHQSFWPNLPESDYSSVGKGKGSGFNINLPWNKVGMTNSDYLAAFFHVLLPVAYEFDPELVIVSAGFDSAIGDPEGEMCALPEIFAHLTHLLMPLAAGKMCVVLEGGYNLTSLGQSVCQTVHSLLGDPTPRISGLGTACDSALESIQNVRNVQSSYWSSFKHLAQSETNPKRPRLDATNGGPKESSEPASESNPKKTAQDIVWPEPLKRMPASVRTVVVPPPGVELTLPKNCQHSGDISESTAKEVQRIRDKHFHDLTDQNILRSLGNIISVLDRMMRSDEVCNGCVVVSDLSVSVQCALQHALTEPAERVLVVYVGDGELPVKTNDGKVFLVQICTKETEDKCVNRLSLCLREGESLTAGFMQALLGLILPVAYEFNPALVLGIVGETAAKTGLMTVWGHMTCLIQGLARGRTLTLLQGYDKDLLELTVSALSGASISPLGPLRALKPEDVEMMEKQRQRLQERWGLLRCTVSES.

Residue D22 coordinates substrate. The short motif at 23 to 26 is the Substrate specificity element; it reads PACE. D94 is a substrate binding site. The Proton donor/acceptor role is filled by H137. The Zn(2+) site is built by D174, H176, and D267. Position 307 (Y307) interacts with substrate. Residues 362–399 are disordered; the sequence is LAQSETNPKRPRLDATNGGPKESSEPASESNPKKTAQD.

Belongs to the histone deacetylase family. HD type 2 subfamily.

It localises to the cytoplasm. The protein resides in the nucleus. It carries out the reaction N(8)-acetylspermidine + H2O = spermidine + acetate. The enzyme catalyses N-acetylputrescine + H2O = putrescine + acetate. It catalyses the reaction N-acetylcadaverine + H2O = cadaverine + acetate. Polyamine deacetylase (PDAC), which acts preferentially on N(8)-acetylspermidine, and also on acetylcadaverine and acetylputrescine. Exhibits attenuated catalytic activity toward N(1),N(8)-diacetylspermidine and very low activity, if any, toward N(1)-acetylspermidine. Has a very weak lysine deacetylase, if any. In Danio rerio (Zebrafish), this protein is Polyamine deacetylase HDAC10 (hdac10).